The primary structure comprises 451 residues: NADH-quinone oxidoreductase subunit H (451 aa).

9 consecutive transmembrane segments (helical) span residues 30-50 (LIIV…LFMI), 98-118 (AVFI…FAVI), 138-158 (LPVA…GIVL), 176-196 (AAQV…VFLY), 213-233 (WGIL…VGET), 262-282 (LFYL…TTLF), 302-322 (WWPV…FIWL), 336-356 (QFGW…EAAI), and 368-388 (VIPF…ADLV).

This sequence belongs to the complex I subunit 1 family. NDH-1 is composed of 14 different subunits. Subunits NuoA, H, J, K, L, M, N constitute the membrane sector of the complex.

Its subcellular location is the cell membrane. The catalysed reaction is a quinone + NADH + 5 H(+)(in) = a quinol + NAD(+) + 4 H(+)(out). In terms of biological role, NDH-1 shuttles electrons from NADH, via FMN and iron-sulfur (Fe-S) centers, to quinones in the respiratory chain. The immediate electron acceptor for the enzyme in this species is believed to be ubiquinone. Couples the redox reaction to proton translocation (for every two electrons transferred, four hydrogen ions are translocated across the cytoplasmic membrane), and thus conserves the redox energy in a proton gradient. This subunit may bind ubiquinone. This Acidothermus cellulolyticus (strain ATCC 43068 / DSM 8971 / 11B) protein is NADH-quinone oxidoreductase subunit H.